The primary structure comprises 147 residues: Globin, major monomeric component (147 aa).

Residues 1-146 (GLSAAQRQVI…ISGALISGLQ (146 aa)) enclose the Globin domain. His90 lines the heme b pocket.

Belongs to the globin family. In terms of assembly, monomer.

The chain is Globin, major monomeric component from Glycera dibranchiata (Bloodworm).